We begin with the raw amino-acid sequence, 396 residues long: S-adenosylmethionine synthase (396 aa).

Residue His-14 coordinates ATP. Asp-16 is a binding site for Mg(2+). Glu-42 is a binding site for K(+). L-methionine is bound by residues Glu-55 and Gln-98. The tract at residues 98–108 is flexible loop; that stretch reads QSPDIALGVNK. ATP-binding positions include 174-176, 241-242, Asp-250, 256-257, Ala-273, and Lys-277; these read DGK, RF, and RK. Asp-250 is a binding site for L-methionine. Lys-281 contacts L-methionine.

The protein belongs to the AdoMet synthase family. As to quaternary structure, homotetramer; dimer of dimers. Mg(2+) serves as cofactor. K(+) is required as a cofactor.

The protein resides in the cytoplasm. It carries out the reaction L-methionine + ATP + H2O = S-adenosyl-L-methionine + phosphate + diphosphate. Its pathway is amino-acid biosynthesis; S-adenosyl-L-methionine biosynthesis; S-adenosyl-L-methionine from L-methionine: step 1/1. Functionally, catalyzes the formation of S-adenosylmethionine (AdoMet) from methionine and ATP. The overall synthetic reaction is composed of two sequential steps, AdoMet formation and the subsequent tripolyphosphate hydrolysis which occurs prior to release of AdoMet from the enzyme. In Pseudothermotoga lettingae (strain ATCC BAA-301 / DSM 14385 / NBRC 107922 / TMO) (Thermotoga lettingae), this protein is S-adenosylmethionine synthase.